The following is an 856-amino-acid chain: MKQYNAIKGKYPGALLLFRVGDFYETFSEDAIKASKVLGITLTKRGNGTASETALAGFPHHSLDTYLPRLVRSGLRVAICDQLEDPKSVKGIVKRGVTELVTPGVSFNDHVLDVSKNNYLAAIHFQKDSLGISFLDISTGEFLTAQGDRHYIDKLLQSFSPSEVLFCKQKKEVFIEYFGDRYNTYALEDWIFAYDFTYDLLIRHFQTTSLKGFGIEEMLEGITSAGAILHYLNETEHKEVAHITRVNRIEEERYVWLDRFTIRNLELVNAQQLEGVPLIEILDHTKTPMGARLLKKWLILPLKELTPIQERLDTVELLVKNKELTTTLVDELKPIGDLERLISKVAARRVNPREMVQLKRSLERLVPIQQLLKQQDQHVLLKLAEQINPCEYLAGRILNMLKEDAPMLTNQGRIIRDGCNAELDELRAIAYTGKDYLLQIQQREIERTGISSLKISYNKVFGYYLEVTNTHKEKVPADWIRKQTLTGAERYITEELKIYEEKILGAEDKINVIEQKMFQDLVLEAESYINPILQNARIVAQIDCLCSFAHAAVANNYCKPIVEDSALINIKAGRHPVIEKQLPLGESYIPNDIYLDDETQQVMIITGPNMAGKSALLRQTALIVLMAQAGSFVPATHATIGTVDKVFTRVGASDNLSKGESTFMVEMNETASILNNLSGRSLVLMDEIGRGTSTYDGISIAWAIVEHLHNHPNFRPKTLFATHYHELNQLTEDLKRVKNFNVSVKEAGNKVIFMRTLKPGGSEHSFGIHVAQMAGMPTSLVLRANEIMGHLEKEHVREGHEDKLKEVPKSTLQMSLFEAADPAWDSIKKILTQTDVNIMSPVEALLKLNELKQLIK.

607 to 614 (GPNMAGKS) is an ATP binding site.

Belongs to the DNA mismatch repair MutS family.

This protein is involved in the repair of mismatches in DNA. It is possible that it carries out the mismatch recognition step. This protein has a weak ATPase activity. The protein is DNA mismatch repair protein MutS of Cytophaga hutchinsonii (strain ATCC 33406 / DSM 1761 / CIP 103989 / NBRC 15051 / NCIMB 9469 / D465).